The following is a 359-amino-acid chain: Peptide chain release factor 1 (359 aa).

Q235 carries the N5-methylglutamine modification.

It belongs to the prokaryotic/mitochondrial release factor family. Methylated by PrmC. Methylation increases the termination efficiency of RF1.

It localises to the cytoplasm. Its function is as follows. Peptide chain release factor 1 directs the termination of translation in response to the peptide chain termination codons UAG and UAA. This Nitrosomonas eutropha (strain DSM 101675 / C91 / Nm57) protein is Peptide chain release factor 1.